Here is a 116-residue protein sequence, read N- to C-terminus: Nitrogen regulatory PII-like protein (116 aa).

The protein belongs to the P(II) protein family. Needs to interact with NrgA in order to localize correctly to the membrane.

Its subcellular location is the cell membrane. Functionally, required for full induction of the nrgAB operon under conditions of ammonium limitation. The polypeptide is Nitrogen regulatory PII-like protein (nrgB) (Bacillus subtilis (strain 168)).